The following is a 1216-amino-acid chain: Tyrosine-protein kinase receptor ver-4 (1216 aa).

The Extracellular segment spans residues 1-789 (MRVSLTEFLV…VKVAGASSSS (789 aa)). Residues N142, N195, N206, N245, N283, N333, N348, N384, N402, N412, N496, N508, N588, N599, N664, and N703 are each glycosylated (N-linked (GlcNAc...) asparagine). 2 Ig-like C2-type domains span residues 596–691 (KSVN…TSIS) and 697–783 (PPFL…VKVA). C619 and C675 are disulfide-bonded. C721 and C765 form a disulfide bridge. Residues 790–810 (FFWLFITFFAFVVVGIVVSLL) traverse the membrane as a helical segment. The Cytoplasmic portion of the chain corresponds to 811–1216 (WKLFGQKDLK…WVQKPTQLFF (406 aa)). Residues 870-1181 (LEILETLGSG…IKLFKNHIQY (312 aa)) form the Protein kinase domain. Residues 876–884 (LGSGQFGIV) and K908 contribute to the ATP site. D1042 acts as the Proton acceptor in catalysis.

It belongs to the protein kinase superfamily. Tyr protein kinase family.

It is found in the cell membrane. The catalysed reaction is L-tyrosyl-[protein] + ATP = O-phospho-L-tyrosyl-[protein] + ADP + H(+). In terms of biological role, receptor tyrosine kinase which may be involved, downstream of pvf-1, in the positioning of ray 1, the most anterior ray sensillum in the male tail. The sequence is that of Tyrosine-protein kinase receptor ver-4 from Caenorhabditis elegans.